A 296-amino-acid polypeptide reads, in one-letter code: Thiamine-monophosphate kinase (296 aa).

The Mg(2+) site is built by aspartate 32, threonine 46, and aspartate 48. Aspartate 55 lines the substrate pocket. Residues aspartate 76 and aspartate 121 each coordinate Mg(2+). Residues 120–121 (GD) and arginine 144 each bind ATP. Aspartate 206 lines the Mg(2+) pocket. Residue serine 208 coordinates ATP. Aspartate 209 is a binding site for Mg(2+). Tyrosine 293 lines the substrate pocket.

Belongs to the thiamine-monophosphate kinase family.

It carries out the reaction thiamine phosphate + ATP = thiamine diphosphate + ADP. The protein operates within cofactor biosynthesis; thiamine diphosphate biosynthesis; thiamine diphosphate from thiamine phosphate: step 1/1. In terms of biological role, catalyzes the ATP-dependent phosphorylation of thiamine-monophosphate (TMP) to form thiamine-pyrophosphate (TPP), the active form of vitamin B1. The sequence is that of Thiamine-monophosphate kinase from Archaeoglobus fulgidus (strain ATCC 49558 / DSM 4304 / JCM 9628 / NBRC 100126 / VC-16).